Here is a 556-residue protein sequence, read N- to C-terminus: MSILNPRTSLEAGDSEDACCAAMASVCCINTKEDADSPSAGLPSGTTQNLDVEEIQGYDVEFDPPLESKYECPICLMALREAVQTPCGHRFCKACILKSLRNAGHKCPVDNEILMEKQLFPDNFAKREILSLRVKCPNLGCTDTMELRHLEHHLVQCQFASVECSQCQGSFLKLLLDKHMEHECGRRRTFCDNCGLAMAYEDKSGHELICPMAYVTCDYCQTNLIREQMPAHYSMDCTMAPIPCMYCEFGCREKMQRHNLAGHLQDFTQAHMRMMAQTLRSFSTTPTSHISDISFCDPNQFEPVPLSVAPAHPSHMPSQQDCSQETRNLRETVEQLEGRLVRQDHQIRELIAKMETQCTYVNELKHTIHSLEDKVADMDAHRCNGVFIWRIKGFSGLQKSQEEEKPVVIHSPGFYTGDPGYKLCLRLHLQLPSAQRCANYISLFVHTMQGDYDSLLPWPLQGTIRLSILDQSESTARQDQVEVMDTKPDLLAFQRPTAPRNPKGFGYVTFMHLNTLKQRQYVKNDTLLVRCSVNIHLDLTSPRREGFQPRSGEGTL.

The RING-type; degenerate zinc finger occupies 72–111 (CPICLMALREAVQTPCGHRFCKACILKSLRNAGHKCPVDN). TRAF-type zinc fingers lie at residues 148–204 (RHLE…EDKS) and 205–261 (GHEL…HNLA). One can recognise an MATH domain in the interval 384–533 (NGVFIWRIKG…NDTLLVRCSV (150 aa)).

This sequence belongs to the TNF receptor-associated factor family. A subfamily. As to quaternary structure, homotrimer. Homooligomer. Interacts with tifa. As to expression, highly expressed in ovary and moderately expressed in kidney, spleen, stomach, colon and testis.

Its subcellular location is the cytoplasm. The protein localises to the cell cortex. The protein resides in the nucleus. It is found in the lipid droplet. The enzyme catalyses S-ubiquitinyl-[E2 ubiquitin-conjugating enzyme]-L-cysteine + [acceptor protein]-L-lysine = [E2 ubiquitin-conjugating enzyme]-L-cysteine + N(6)-ubiquitinyl-[acceptor protein]-L-lysine.. The protein operates within protein modification; protein ubiquitination. Functionally, E3 ubiquitin ligase that, together with UBE2N and UBE2V1, mediates the synthesis of 'Lys-63'-linked-polyubiquitin chains conjugated to proteins, such as IKBKG, IRAK1, AKT1 and AKT2. Also mediates ubiquitination of free/unanchored polyubiquitin chain that leads to MAP3K7 activation. The chain is TNF receptor-associated factor 6-A (traf6-a) from Xenopus laevis (African clawed frog).